Reading from the N-terminus, the 284-residue chain is 2-dehydro-3-deoxyphosphooctonate aldolase (284 aa).

It belongs to the KdsA family.

Its subcellular location is the cytoplasm. It catalyses the reaction D-arabinose 5-phosphate + phosphoenolpyruvate + H2O = 3-deoxy-alpha-D-manno-2-octulosonate-8-phosphate + phosphate. The protein operates within carbohydrate biosynthesis; 3-deoxy-D-manno-octulosonate biosynthesis; 3-deoxy-D-manno-octulosonate from D-ribulose 5-phosphate: step 2/3. It participates in bacterial outer membrane biogenesis; lipopolysaccharide biosynthesis. The chain is 2-dehydro-3-deoxyphosphooctonate aldolase from Histophilus somni (strain 2336) (Haemophilus somnus).